Reading from the N-terminus, the 275-residue chain is 2,3,4,5-tetrahydropyridine-2,6-dicarboxylate N-succinyltransferase (275 aa).

Substrate contacts are provided by Arg-104 and Asp-141.

This sequence belongs to the transferase hexapeptide repeat family. Homotrimer.

The protein localises to the cytoplasm. The catalysed reaction is (S)-2,3,4,5-tetrahydrodipicolinate + succinyl-CoA + H2O = (S)-2-succinylamino-6-oxoheptanedioate + CoA. Its pathway is amino-acid biosynthesis; L-lysine biosynthesis via DAP pathway; LL-2,6-diaminopimelate from (S)-tetrahydrodipicolinate (succinylase route): step 1/3. This chain is 2,3,4,5-tetrahydropyridine-2,6-dicarboxylate N-succinyltransferase, found in Aeromonas hydrophila subsp. hydrophila (strain ATCC 7966 / DSM 30187 / BCRC 13018 / CCUG 14551 / JCM 1027 / KCTC 2358 / NCIMB 9240 / NCTC 8049).